The primary structure comprises 751 residues: Trehalose phosphorylase (751 aa).

Residues 1–26 (MSTPHHQFESKSSTAIRRRLSSSVSS) constitute a propeptide that is removed on maturation. The tract at residues 1–28 (MSTPHHQFESKSSTAIRRRLSSSVSSKQ) is disordered.

It belongs to the glycosyltransferase group 1 family. Glycosyltransferase 4 subfamily. Homodimer. As to expression, expressed in mycelia, stipes and pilei.

It catalyses the reaction alpha,alpha-trehalose + phosphate = alpha-D-glucose + alpha-D-glucose 1-phosphate. Its function is as follows. Reversibly catalyzes the synthesis and degradation of trehalose from glucose and alpha-D-glucose 1-phosphate. The equilibrium lies in the direction of trehalose synthesis. This is Trehalose phosphorylase from Pleurotus sajor-caju (Oyster mushroom).